Consider the following 224-residue polypeptide: UPF0758 protein Sde_3678 (224 aa).

One can recognise an MPN domain in the interval 102 to 224 (SLTSTTAVKQ…AVSFAERGWI (123 aa)). Zn(2+) contacts are provided by histidine 173, histidine 175, and aspartate 186. Residues 173-186 (HNHPSGIAEPSEPD) carry the JAMM motif motif.

This sequence belongs to the UPF0758 family.

This is UPF0758 protein Sde_3678 from Saccharophagus degradans (strain 2-40 / ATCC 43961 / DSM 17024).